The primary structure comprises 97 residues: UPF0223 protein lp_2149 (97 aa).

The protein belongs to the UPF0223 family.

This chain is UPF0223 protein lp_2149, found in Lactiplantibacillus plantarum (strain ATCC BAA-793 / NCIMB 8826 / WCFS1) (Lactobacillus plantarum).